The sequence spans 218 residues: Claudin-5 (218 aa).

The Cytoplasmic portion of the chain corresponds to 1–7 (MGSAALE). A helical membrane pass occupies residues 8 to 28 (ILGLVLCLVGWVGLILACGLP). Residues 29 to 81 (MWQVTAFLDHNIVTAQTTWKGLWMSCVVQSTGHMQCKVYESVLALSAEVQAAR) lie on the Extracellular side of the membrane. Residues 82–102 (ALTVGAVLLALVALFVTLTGA) traverse the membrane as a helical segment. The Cytoplasmic segment spans residues 103-123 (QCTTCVAPGPVKARVALTGGA). The chain crosses the membrane as a helical span at residues 124 to 144 (LYAVCGLLALVPLCWFANIVV). Topologically, residues 145 to 160 (REFYDPTVPVSQKYEL) are extracellular. A helical transmembrane segment spans residues 161–181 (GAALYIGWAASALLMCGGGLV). Over 182–218 (CCGAWVCTGRPEFSFPVKYSAPRRPTANGDYDKKNYV) the chain is Cytoplasmic. The interactions with TJP1, TJP2 and TJP3 stretch occupies residues 217–218 (YV).

Belongs to the claudin family. Interacts with MPDZ. Directly interacts with TJP1/ZO-1, TJP2/ZO-2 and TJP3/ZO-3. In terms of tissue distribution, widely expressed with highest levels in the lung.

The protein localises to the cell junction. It localises to the tight junction. Its subcellular location is the cell membrane. Plays a major role in tight junction-specific obliteration of the intercellular space, through calcium-independent cell-adhesion activity. This Mus musculus (Mouse) protein is Claudin-5 (Cldn5).